We begin with the raw amino-acid sequence, 674 residues long: DNA ligase (674 aa).

NAD(+) contacts are provided by residues 34 to 38 (DFEFD), 83 to 84 (SL), and Glu117. Lys119 (N6-AMP-lysine intermediate) is an active-site residue. NAD(+)-binding residues include Arg140, Glu184, Lys297, and Lys321. Residues Cys415, Cys418, Cys433, and Cys439 each coordinate Zn(2+). Positions 598-674 (LVNNNFEGQS…IDEDEFERML (77 aa)) constitute a BRCT domain.

This sequence belongs to the NAD-dependent DNA ligase family. LigA subfamily. Mg(2+) serves as cofactor. Mn(2+) is required as a cofactor.

The enzyme catalyses NAD(+) + (deoxyribonucleotide)n-3'-hydroxyl + 5'-phospho-(deoxyribonucleotide)m = (deoxyribonucleotide)n+m + AMP + beta-nicotinamide D-nucleotide.. Its function is as follows. DNA ligase that catalyzes the formation of phosphodiester linkages between 5'-phosphoryl and 3'-hydroxyl groups in double-stranded DNA using NAD as a coenzyme and as the energy source for the reaction. It is essential for DNA replication and repair of damaged DNA. In Chlorobaculum tepidum (strain ATCC 49652 / DSM 12025 / NBRC 103806 / TLS) (Chlorobium tepidum), this protein is DNA ligase.